The chain runs to 839 residues: Taste receptor type 1 member 2 (839 aa).

Positions 1 to 19 are cleaved as a signal peptide; that stretch reads MGPRATTICSLFFLLWVLA. At 20 to 566 the chain is on the extracellular side; the sequence is EPAENSDFYL…AFLEWHEAPT (547 aa). Residues N84, N248, N292, N312, N368, N428, N487, and N527 are each glycosylated (N-linked (GlcNAc...) asparagine). The chain crosses the membrane as a helical span at residues 567 to 587; that stretch reads IAVALLAALGFLSTLAILVIF. Residues 588-602 lie on the Cytoplasmic side of the membrane; the sequence is WRHFQTPMVRSAGGP. A helical transmembrane segment spans residues 603–623; sequence MCFLMLTLLLVAYMVVPVYVG. Over 624–635 the chain is Extracellular; sequence PPKVSTCLCRQA. A helical membrane pass occupies residues 636-656; sequence LFPLCFTICISCIAVRSFQII. Residues 657–681 are Cytoplasmic-facing; sequence CAFKMASRFPRAYSYWVRYQGPYVS. The helical transmembrane segment at 682–702 threads the bilayer; the sequence is MAFITVLKMVIVVIGMLATGL. Topologically, residues 703–727 are extracellular; that stretch reads NPTTRTDPDDPKIMIVSCNPNYRNS. Residues 728–748 traverse the membrane as a helical segment; the sequence is LLFNTSLDLLLSVVGFSFANM. The Cytoplasmic segment spans residues 749 to 760; that stretch reads GKELPTNYNEAK. Residues 761-781 form a helical membrane-spanning segment; sequence FITLSMTFYFTSSISLCTFMS. Topologically, residues 782 to 784 are extracellular; it reads AYS. The chain crosses the membrane as a helical span at residues 785–805; the sequence is GVLVTIVDLLVTVLNLLAISL. Over 806–839 the chain is Cytoplasmic; it reads GYFGPKCYMILFYPERNTPAYFNSVIQGYTMTRD.

The protein belongs to the G-protein coupled receptor 3 family. TAS1R subfamily. In terms of assembly, forms heterodimers with TAS1R3.

Its subcellular location is the cell membrane. Its function is as follows. Putative taste receptor. TAS1R2/TAS1R3 recognizes diverse natural and synthetic sweeteners. In Pongo pygmaeus (Bornean orangutan), this protein is Taste receptor type 1 member 2 (TAS1R2).